A 363-amino-acid chain; its full sequence is Aminomethyltransferase (363 aa).

The protein belongs to the GcvT family. The glycine cleavage system is composed of four proteins: P, T, L and H.

It catalyses the reaction N(6)-[(R)-S(8)-aminomethyldihydrolipoyl]-L-lysyl-[protein] + (6S)-5,6,7,8-tetrahydrofolate = N(6)-[(R)-dihydrolipoyl]-L-lysyl-[protein] + (6R)-5,10-methylene-5,6,7,8-tetrahydrofolate + NH4(+). The glycine cleavage system catalyzes the degradation of glycine. This is Aminomethyltransferase from Thioalkalivibrio sulfidiphilus (strain HL-EbGR7).